The primary structure comprises 254 residues: Diphthine synthase (254 aa).

S-adenosyl-L-methionine-binding positions include Leu-11, Asp-86, Ile-89, 114–115 (SV), Leu-166, Leu-207, and His-232.

The protein belongs to the diphthine synthase family. Homodimer.

It catalyses the reaction 2-[(3S)-amino-3-carboxypropyl]-L-histidyl-[translation elongation factor 2] + 3 S-adenosyl-L-methionine = diphthine-[translation elongation factor 2] + 3 S-adenosyl-L-homocysteine + 3 H(+). It participates in protein modification; peptidyl-diphthamide biosynthesis. In terms of biological role, S-adenosyl-L-methionine-dependent methyltransferase that catalyzes the trimethylation of the amino group of the modified target histidine residue in translation elongation factor 2 (EF-2), to form an intermediate called diphthine. The three successive methylation reactions represent the second step of diphthamide biosynthesis. The protein is Diphthine synthase of Sulfurisphaera tokodaii (strain DSM 16993 / JCM 10545 / NBRC 100140 / 7) (Sulfolobus tokodaii).